We begin with the raw amino-acid sequence, 430 residues long: 3-phosphoshikimate 1-carboxyvinyltransferase (430 aa).

Residues Lys-21, Ser-22, and Arg-26 each coordinate 3-phosphoshikimate. Residue Lys-21 participates in phosphoenolpyruvate binding. Gly-95 and Arg-123 together coordinate phosphoenolpyruvate. 3-phosphoshikimate-binding residues include Thr-167, Gln-169, Asp-315, and Lys-342. Gln-169 serves as a coordination point for phosphoenolpyruvate. Residue Asp-315 is the Proton acceptor of the active site. Positions 346 and 390 each coordinate phosphoenolpyruvate.

This sequence belongs to the EPSP synthase family. Monomer.

It localises to the cytoplasm. It carries out the reaction 3-phosphoshikimate + phosphoenolpyruvate = 5-O-(1-carboxyvinyl)-3-phosphoshikimate + phosphate. The protein operates within metabolic intermediate biosynthesis; chorismate biosynthesis; chorismate from D-erythrose 4-phosphate and phosphoenolpyruvate: step 6/7. In terms of biological role, catalyzes the transfer of the enolpyruvyl moiety of phosphoenolpyruvate (PEP) to the 5-hydroxyl of shikimate-3-phosphate (S3P) to produce enolpyruvyl shikimate-3-phosphate and inorganic phosphate. This Endomicrobium trichonymphae protein is 3-phosphoshikimate 1-carboxyvinyltransferase.